Here is a 293-residue protein sequence, read N- to C-terminus: Bifunctional protein FolD (293 aa).

NADP(+) is bound by residues 165–167 (GRS), serine 190, and isoleucine 231.

Belongs to the tetrahydrofolate dehydrogenase/cyclohydrolase family. In terms of assembly, homodimer.

It catalyses the reaction (6R)-5,10-methylene-5,6,7,8-tetrahydrofolate + NADP(+) = (6R)-5,10-methenyltetrahydrofolate + NADPH. It carries out the reaction (6R)-5,10-methenyltetrahydrofolate + H2O = (6R)-10-formyltetrahydrofolate + H(+). It participates in one-carbon metabolism; tetrahydrofolate interconversion. Functionally, catalyzes the oxidation of 5,10-methylenetetrahydrofolate to 5,10-methenyltetrahydrofolate and then the hydrolysis of 5,10-methenyltetrahydrofolate to 10-formyltetrahydrofolate. This chain is Bifunctional protein FolD, found in Synechococcus sp. (strain CC9311).